The sequence spans 222 residues: Elongation factor 1-beta' (222 aa).

Positions 71–113 (SQGTSPLTAGAKPTAPAPAAKDDDDDDVDLFGSGDEEEDAEAE) are disordered. Positions 78–89 (TAGAKPTAPAPA) are enriched in low complexity. Acidic residues predominate over residues 92-111 (DDDDDDVDLFGSGDEEEDAE).

This sequence belongs to the EF-1-beta/EF-1-delta family. As to quaternary structure, EF-1 is composed of 4 subunits: alpha, beta, beta' and gamma. Phosphorylated.

In terms of biological role, EF-1-beta and EF-1-beta' stimulate the exchange of GDP bound to EF-1-alpha to GTP. The polypeptide is Elongation factor 1-beta' (Bombyx mori (Silk moth)).